A 138-amino-acid polypeptide reads, in one-letter code: Large ribosomal subunit protein bL19 (138 aa).

Belongs to the bacterial ribosomal protein bL19 family.

This protein is located at the 30S-50S ribosomal subunit interface and may play a role in the structure and function of the aminoacyl-tRNA binding site. The sequence is that of Large ribosomal subunit protein bL19 from Leptospira interrogans serogroup Icterohaemorrhagiae serovar Lai (strain 56601).